The sequence spans 425 residues: MEPSATPGAQMGVPPGSREPSPVPPDYEDEFLRYLWRDYLYPKQYEWVLIAAYVAVFVVALVGNTLVCLAVWRNHHMRTVTNYFIVNLSLADVLVTAICLPASLLVDITESWLFGHALCKVIPYLQAVSVSVAVLTLSFIALDRWYAICHPLLFKSTARRARGSILGIWAVSLAIMVPQAAVMECSSVLPELANRTRLFSVCDERWADDLYPKIYHSCFFIVTYLAPLGLMAMAYFQIFRKLWGRQIPGTTSALVRNWKRPSDQLGDLEQGLSGEPQPRARAFLAEVKQMRARRKTAKMLMVVLLVFALCYLPISVLNVLKRVFGMFRQASDREAVYACFTFSHWLVYANSAANPIIYNFLSGKFREQFKAAFSCCLPGLGPCGSLKAPSPRSSASHKSLSLQSRCSISKISEHVVLTSVTTVLP.

Residues 1-24 are disordered; it reads MEPSATPGAQMGVPPGSREPSPVP. Residues 1–46 are Extracellular-facing; sequence MEPSATPGAQMGVPPGSREPSPVPPDYEDEFLRYLWRDYLYPKQYE. Residues 26 to 41 are required for response to orexin-A; the sequence is DYEDEFLRYLWRDYLY. The helical transmembrane segment at 47–67 threads the bilayer; that stretch reads WVLIAAYVAVFVVALVGNTLV. Over 68 to 82 the chain is Cytoplasmic; it reads CLAVWRNHHMRTVTN. The chain crosses the membrane as a helical span at residues 83 to 105; that stretch reads YFIVNLSLADVLVTAICLPASLL. Topologically, residues 106–119 are extracellular; it reads VDITESWLFGHALC. Cys-119 and Cys-202 are disulfide-bonded. The helical transmembrane segment at 120–140 threads the bilayer; the sequence is KVIPYLQAVSVSVAVLTLSFI. Topologically, residues 141 to 160 are cytoplasmic; the sequence is ALDRWYAICHPLLFKSTARR. A helical transmembrane segment spans residues 161–182; it reads ARGSILGIWAVSLAIMVPQAAV. At 183–213 the chain is on the extracellular side; it reads MECSSVLPELANRTRLFSVCDERWADDLYPK. Asn-194 carries N-linked (GlcNAc...) asparagine glycosylation. Residues 214 to 235 traverse the membrane as a helical segment; the sequence is IYHSCFFIVTYLAPLGLMAMAY. The Cytoplasmic portion of the chain corresponds to 236-298; that stretch reads FQIFRKLWGR…QMRARRKTAK (63 aa). A helical membrane pass occupies residues 299-321; sequence MLMVVLLVFALCYLPISVLNVLK. Asn-318 contacts suvorexant. Over 322 to 336 the chain is Extracellular; sequence RVFGMFRQASDREAV. Residues 337–360 traverse the membrane as a helical segment; sequence YACFTFSHWLVYANSAANPIIYNF. The Cytoplasmic portion of the chain corresponds to 361 to 425; it reads LSGKFREQFK…VLTSVTTVLP (65 aa).

It belongs to the G-protein coupled receptor 1 family.

The protein localises to the cell membrane. Moderately selective excitatory receptor for orexin-A and, with a lower affinity, for orexin-B neuropeptide. Triggers an increase in cytoplasmic Ca(2+) levels in response to orexin-A binding. This is Orexin/Hypocretin receptor type 1 from Homo sapiens (Human).